Reading from the N-terminus, the 177-residue chain is Neuroblastoma suppressor of tumorigenicity 1 (177 aa).

The signal sequence occupies residues 1 to 16 (MLWFVVGALFPALLLA). 5 disulfide bridges follow: Cys-34-Cys-84, Cys-48-Cys-98, Cys-58-Cys-117, Cys-62-Cys-119, and Cys-81-Cys-122. One can recognise a CTCK domain in the interval 34 to 123 (CEAKNITQIV…ILHCSCQACG (90 aa)). The interval 143 to 177 (MPAEGPGPHHYAHHQQEVEEPPASSHHHHEEEGDE) is disordered.

The protein belongs to the DAN family.

The protein resides in the secreted. Its function is as follows. May act as a tumor suppressor. This chain is Neuroblastoma suppressor of tumorigenicity 1 (NBL1), found in Gallus gallus (Chicken).